A 201-amino-acid polypeptide reads, in one-letter code: Ribosomal RNA small subunit methyltransferase G (201 aa).

Residues Gly-71, Phe-76, 120-121 (LE), and Arg-134 contribute to the S-adenosyl-L-methionine site.

The protein belongs to the methyltransferase superfamily. RNA methyltransferase RsmG family.

It localises to the cytoplasm. It carries out the reaction guanosine(527) in 16S rRNA + S-adenosyl-L-methionine = N(7)-methylguanosine(527) in 16S rRNA + S-adenosyl-L-homocysteine. In terms of biological role, specifically methylates the N7 position of guanine in position 527 of 16S rRNA. This chain is Ribosomal RNA small subunit methyltransferase G, found in Rhodospirillum rubrum (strain ATCC 11170 / ATH 1.1.1 / DSM 467 / LMG 4362 / NCIMB 8255 / S1).